Consider the following 444-residue polypeptide: Protein EVI2B (444 aa).

The N-terminal stretch at 1 to 23 is a signal peptide; sequence MEFKYLVFIVLCQYLDNTFFSET. The Extracellular segment spans residues 24-203; it reads EAITTEQQSL…GTAHKNNHNA (180 aa). Residues Asn63, Asn94, Asn104, and Asn127 are each glycosylated (N-linked (GlcNAc...) asparagine). Polar residues-rich tracts occupy residues 104–131 and 160–171; these read NNSL…STGQ and THNQPTKSTPTI. The interval 104-197 is disordered; the sequence is NNSLPQTSPS…EPPSGKGTAH (94 aa). A compositionally biased stretch (pro residues) spans 177–187; the sequence is TPPPPPPPLTS. A helical membrane pass occupies residues 204–224; sequence IAAILIGTIIISMLVAILMII. Over 225–444 the chain is Cytoplasmic; the sequence is LWKYLRKPVL…SLPPPPTELL (220 aa). Thr250 is modified (phosphothreonine). Phosphoserine occurs at positions 269, 272, 279, and 295. 2 stretches are compositionally biased toward polar residues: residues 318-332 and 361-370; these read SEDS…TAVS and SPLPNDSINP. Disordered stretches follow at residues 318-337 and 361-444; these read SEDS…DDAD and SPLP…TELL.

As to expression, expressed in myeloid and lymphoid progenitors and increased in mature hematopoietic populations with the highest levels in granulocytes.

Its subcellular location is the membrane. Required for granulocyte differentiation and functionality of hematopoietic progenitor cells through the control of cell cycle progression and survival of hematopoietic progenitor cells. The protein is Protein EVI2B of Mus musculus (Mouse).